We begin with the raw amino-acid sequence, 277 residues long: NLP effector protein Pc109095 (277 aa).

Residues 1 to 19 (MKFIFAFVLCLAVAQTALG) form the signal peptide. Residues 119–125 (RSRHLWA) carry the Hepta-peptide GHRHDWE motif motif. An N-linked (GlcNAc...) asparagine glycan is attached at N199.

This sequence belongs to the Necrosis inducing protein (NPP1) family.

Its subcellular location is the secreted. Its function is as follows. Secreted effector that contributes strongly to virulence during infection by P.capsici. This Phytophthora capsici protein is NLP effector protein Pc109095.